Reading from the N-terminus, the 171-residue chain is Serine acetyltransferase (171 aa).

Belongs to the transferase hexapeptide repeat family.

It is found in the cytoplasm. It carries out the reaction L-serine + acetyl-CoA = O-acetyl-L-serine + CoA. It participates in amino-acid biosynthesis; L-cysteine biosynthesis; L-cysteine from L-serine: step 1/2. This chain is Serine acetyltransferase (cysE), found in Helicobacter pylori (strain ATCC 700392 / 26695) (Campylobacter pylori).